The sequence spans 316 residues: 4-hydroxyphenylacetate decarboxylase activating enzyme (316 aa).

One can recognise a Radical SAM core domain in the interval 20–307; it reads HDGPGCRTTV…QDIFLDNGIA (288 aa). Residues Cys-34, Cys-38, Cys-41, Cys-60, Cys-66, Cys-69, and Cys-105 each coordinate [4Fe-4S] cluster. Position 40 to 42 (40 to 42) interacts with S-adenosyl-L-methionine; that stretch reads WCA. One can recognise a 4Fe-4S ferredoxin-type domain in the interval 84-115; sequence NKPVIDWNICKDCESFECVNSCYYNAFKLCAK. S-adenosyl-L-methionine-binding positions include Gly-144, 193–195, and His-267; that span reads DIK.

Belongs to the organic radical-activating enzymes family. Monomer. It depends on [4Fe-4S] cluster as a cofactor.

The catalysed reaction is glycyl-[protein] + reduced [flavodoxin] + S-adenosyl-L-methionine = glycin-2-yl radical-[protein] + semiquinone [flavodoxin] + 5'-deoxyadenosine + L-methionine + H(+). Functionally, catalyzes activation of 4-hydroxyphenylacetate decarboxylase under anaerobic conditions by generation of an organic free radical on a glycine residue, via a homolytic cleavage of S-adenosyl-L-methionine (SAM). In Clostridioides difficile (strain 630) (Peptoclostridium difficile), this protein is 4-hydroxyphenylacetate decarboxylase activating enzyme.